Here is a 98-residue protein sequence, read N- to C-terminus: Prolactin-releasing peptide (98 aa).

The first 22 residues, 1-22, serve as a signal peptide directing secretion; the sequence is MKAVGAWLLCLLLLGLALQGAA. 2 disordered regions span residues 52 to 71 and 79 to 98; these read RFGR…PRRV and GGAE…LVQE. Phenylalanine amide is present on F53. The propeptide occupies 58-98; it reads AAPGDGPRPGPRRVPACFRLEGGAEPSRALPGRLTAQLVQE.

Post-translationally, amidation of C-terminus is required for receptor interaction. In terms of tissue distribution, medulla oblongata and hypothalamus.

It is found in the secreted. Stimulates prolactin (PRL) release and regulates the expression of prolactin through its receptor GPR10. May stimulate lactotrophs directly to secrete PRL. This is Prolactin-releasing peptide (PRLH) from Bos taurus (Bovine).